The sequence spans 236 residues: Phosphoribosylaminoimidazole-succinocarboxamide synthase (236 aa).

Belongs to the SAICAR synthetase family.

It carries out the reaction 5-amino-1-(5-phospho-D-ribosyl)imidazole-4-carboxylate + L-aspartate + ATP = (2S)-2-[5-amino-1-(5-phospho-beta-D-ribosyl)imidazole-4-carboxamido]succinate + ADP + phosphate + 2 H(+). Its pathway is purine metabolism; IMP biosynthesis via de novo pathway; 5-amino-1-(5-phospho-D-ribosyl)imidazole-4-carboxamide from 5-amino-1-(5-phospho-D-ribosyl)imidazole-4-carboxylate: step 1/2. In Akkermansia muciniphila (strain ATCC BAA-835 / DSM 22959 / JCM 33894 / BCRC 81048 / CCUG 64013 / CIP 107961 / Muc), this protein is Phosphoribosylaminoimidazole-succinocarboxamide synthase.